The following is a 116-amino-acid chain: Probable non-functional immunoglobulin kappa variable 3-7 (116 aa).

The signal sequence occupies residues 1-21; sequence MEAPAQLLFLLLLWLPDTTRE. Residues 21–43 are framework-1; it reads EIVMTQSPPTLSLSPGERVTLSC. Residues 22-116 enclose the Ig-like domain; it reads IVMTQSPPTL…YYCQQDYNLP (95 aa). Cysteine 43 and cysteine 109 are oxidised to a cystine. The tract at residues 44 to 55 is complementarity-determining-1; the sequence is RASQSVSSSYLT. Residues 56 to 70 are framework-2; that stretch reads WYQQKPGQAPRLLIY. A complementarity-determining-2 region spans residues 71–77; it reads GASTRAT. A framework-3 region spans residues 78-109; it reads SIPARFSGSGSGTDFTLTISSLQPEDFAVYYC. Positions 110–116 are complementarity-determining-3; sequence QQDYNLP.

Immunoglobulins are composed of two identical heavy chains and two identical light chains; disulfide-linked.

The protein resides in the secreted. It localises to the cell membrane. Functionally, probable non-functional open reading frame (ORF) of V region of the variable domain of immunoglobulin light chains. Non-functional ORF generally cannot participate in the synthesis of a productive immunoglobulin chain due to altered V-(D)-J or switch recombination and/or splicing site (at mRNA level) and/or conserved amino acid change (protein level). Immunoglobulins, also known as antibodies, are membrane-bound or secreted glycoproteins produced by B lymphocytes. In the recognition phase of humoral immunity, the membrane-bound immunoglobulins serve as receptors which, upon binding of a specific antigen, trigger the clonal expansion and differentiation of B lymphocytes into immunoglobulins-secreting plasma cells. Secreted immunoglobulins mediate the effector phase of humoral immunity, which results in the elimination of bound antigens. The antigen binding site is formed by the variable domain of one heavy chain, together with that of its associated light chain. Thus, each immunoglobulin has two antigen binding sites with remarkable affinity for a particular antigen. The variable domains are assembled by a process called V-(D)-J rearrangement and can then be subjected to somatic hypermutations which, after exposure to antigen and selection, allow affinity maturation for a particular antigen. The polypeptide is Probable non-functional immunoglobulin kappa variable 3-7 (Homo sapiens (Human)).